The chain runs to 523 residues: Polypyrimidine tract-binding protein 3 (523 aa).

Positions 1–25 (MNNSTSAGVYANGNDNKKFKGDRPP) are disordered. 3 RRM domains span residues 30 to 114 (RVLH…NLPN), 153 to 229 (LRII…FSKL), and 329 to 403 (SVLL…LSKH). A Glycyl lysine isopeptide (Lys-Gly) (interchain with G-Cter in SUMO2) cross-link involves residue K36. Y98 is modified (phosphotyrosine). At T109 the chain carries Phosphothreonine. K187 participates in a covalent cross-link: Glycyl lysine isopeptide (Lys-Gly) (interchain with G-Cter in SUMO2). Position 394 is an N6-acetyllysine (K394). The disordered stretch occupies residues 406-426 (VQLPREGQEDQGLTKDFSNSP). At S425 the chain carries Phosphoserine. The RRM 4 domain maps to 446–521 (ATLHLSNIPP…HHLRVSFSKS (76 aa)).

Interacts with THBS4 (via the acidic amphipathic C-terminus). Detected specifically in spleen, thymus, lungs, and bone marrow.

Functionally, RNA-binding protein that mediates pre-mRNA alternative splicing regulation. Plays a role in the regulation of cell proliferation, differentiation and migration. Positive regulator of EPO-dependent erythropoiesis. Participates in cell differentiation regulation by repressing tissue-specific exons. Promotes Fas exon 6 skipping. Binds RNA, preferentially to both poly(G) and poly(U). This Rattus norvegicus (Rat) protein is Polypyrimidine tract-binding protein 3 (Ptbp3).